The following is a 309-amino-acid chain: Olfactory receptor-like protein OLF4 (309 aa).

Over M1–P25 the chain is Extracellular. N-linked (GlcNAc...) asparagine glycosylation is present at N5. The helical transmembrane segment at F26 to V49 threads the bilayer. Over S50–T57 the chain is Cytoplasmic. A helical membrane pass occupies residues P58–P79. Over K80–Q100 the chain is Extracellular. Residues M101 to Y120 form a helical membrane-spanning segment. The Cytoplasmic segment spans residues D121–Q139. The chain crosses the membrane as a helical span at residues L140 to L158. At Q159–N196 the chain is on the extracellular side. The chain crosses the membrane as a helical span at residues M197 to F219. Over K220–K236 the chain is Cytoplasmic. The chain crosses the membrane as a helical span at residues A237–L260. The Extracellular segment spans residues S261–S272. A helical transmembrane segment spans residues V273–L292. The Cytoplasmic segment spans residues R293–P309.

Belongs to the G-protein coupled receptor 1 family.

The protein resides in the cell membrane. Putative odorant or sperm cell receptor. This is Olfactory receptor-like protein OLF4 from Canis lupus familiaris (Dog).